Reading from the N-terminus, the 170-residue chain is MTDTHGTFIPTADLVDIIGDDVRSCDTQFRNLGGRTDFHGTITTVKCFQDNALLKSILGEDNPGGVLVIDGDASLHTALVGDIIAGLGRDHGWSGVVVNGAIRDSAVIGEMEFGCKALGTNPRKSSKTGAGERDVVVSFGGVDFTPGHYLYADSDGIVVTENPVKAPASN.

Substrate is bound by residues 81–84 and Arg103; that span reads GDII. Asp104 contacts a divalent metal cation.

It belongs to the class II aldolase/RraA-like family. Homotrimer. It depends on a divalent metal cation as a cofactor.

It carries out the reaction 4-hydroxy-4-methyl-2-oxoglutarate = 2 pyruvate. The catalysed reaction is oxaloacetate + H(+) = pyruvate + CO2. Catalyzes the aldol cleavage of 4-hydroxy-4-methyl-2-oxoglutarate (HMG) into 2 molecules of pyruvate. Also contains a secondary oxaloacetate (OAA) decarboxylase activity due to the common pyruvate enolate transition state formed following C-C bond cleavage in the retro-aldol and decarboxylation reactions. The chain is Putative 4-hydroxy-4-methyl-2-oxoglutarate aldolase from Corynebacterium efficiens (strain DSM 44549 / YS-314 / AJ 12310 / JCM 11189 / NBRC 100395).